The chain runs to 87 residues: U14-lycotoxin-Ls1c (87 aa).

An N-terminal signal peptide occupies residues 1–20; sequence MNSKVFAVLLLLALLTCILS. In terms of domain architecture, WAP spans 21–66; sequence EKYCPTPRNTSCKKMNIKNNCCRDSDCTSNAFCCAEPCGNFCHKAS. 5 disulfide bridges follow: Cys24-Cys54, Cys32-Cys58, Cys41-Cys53, Cys42-Cys80, and Cys47-Cys62.

This sequence belongs to the venom protein 11 family. 01 (wap-1) subfamily. In terms of processing, contains 5 disulfide bonds. As to expression, expressed by the venom gland.

The protein localises to the secreted. In terms of biological role, has antibacterial activity. This Lycosa singoriensis (Wolf spider) protein is U14-lycotoxin-Ls1c.